We begin with the raw amino-acid sequence, 223 residues long: ATP-dependent dethiobiotin synthetase BioD (223 aa).

12 to 17 contacts ATP; that stretch reads EIGKTH. Threonine 16 is a binding site for Mg(2+). The active site involves lysine 37. Serine 41 serves as a coordination point for substrate. ATP-binding positions include aspartate 52 and 118–121; that span reads EGVG. Positions 52 and 118 each coordinate Mg(2+).

It belongs to the dethiobiotin synthetase family. As to quaternary structure, homodimer. Requires Mg(2+) as cofactor.

It localises to the cytoplasm. The catalysed reaction is (7R,8S)-7,8-diammoniononanoate + CO2 + ATP = (4R,5S)-dethiobiotin + ADP + phosphate + 3 H(+). The protein operates within cofactor biosynthesis; biotin biosynthesis; biotin from 7,8-diaminononanoate: step 1/2. Its function is as follows. Catalyzes a mechanistically unusual reaction, the ATP-dependent insertion of CO2 between the N7 and N8 nitrogen atoms of 7,8-diaminopelargonic acid (DAPA, also called 7,8-diammoniononanoate) to form a ureido ring. The sequence is that of ATP-dependent dethiobiotin synthetase BioD from Acidiphilium cryptum (strain JF-5).